A 217-amino-acid chain; its full sequence is Adapter protein MecA (217 aa).

Belongs to the MecA family. As to quaternary structure, homodimer.

Enables the recognition and targeting of unfolded and aggregated proteins to the ClpC protease or to other proteins involved in proteolysis. In Listeria monocytogenes serotype 4b (strain CLIP80459), this protein is Adapter protein MecA.